We begin with the raw amino-acid sequence, 249 residues long: 2,3-bisphosphoglycerate-dependent phosphoglycerate mutase (249 aa).

Residues 8–15 (RHGESIWN), 21–22 (TG), R60, 87–90 (ERHY), K98, 114–115 (RR), and 183–184 (GN) contribute to the substrate site. The Tele-phosphohistidine intermediate role is filled by H9. The active-site Proton donor/acceptor is the E87.

Belongs to the phosphoglycerate mutase family. BPG-dependent PGAM subfamily.

The enzyme catalyses (2R)-2-phosphoglycerate = (2R)-3-phosphoglycerate. Its pathway is carbohydrate degradation; glycolysis; pyruvate from D-glyceraldehyde 3-phosphate: step 3/5. Its function is as follows. Catalyzes the interconversion of 2-phosphoglycerate and 3-phosphoglycerate. The polypeptide is 2,3-bisphosphoglycerate-dependent phosphoglycerate mutase (Caldanaerobacter subterraneus subsp. tengcongensis (strain DSM 15242 / JCM 11007 / NBRC 100824 / MB4) (Thermoanaerobacter tengcongensis)).